Reading from the N-terminus, the 192-residue chain is Ion-translocating oxidoreductase complex subunit A (192 aa).

Helical transmembrane passes span 5–25 (LLLL…FLGL), 38–58 (AIGM…LSFL), 72–92 (LRTM…EMLV), 102–122 (ALGI…VALL), 134–154 (AIYG…FSAM), and 171–191 (AIAM…AGLI).

It belongs to the NqrDE/RnfAE family. In terms of assembly, the complex is composed of six subunits: RnfA, RnfB, RnfC, RnfD, RnfE and RnfG.

Its subcellular location is the cell inner membrane. In terms of biological role, part of a membrane-bound complex that couples electron transfer with translocation of ions across the membrane. The polypeptide is Ion-translocating oxidoreductase complex subunit A (Shewanella denitrificans (strain OS217 / ATCC BAA-1090 / DSM 15013)).